Here is a 274-residue protein sequence, read N- to C-terminus: Dehydration-responsive element-binding protein 2A (274 aa).

Composition is skewed to basic and acidic residues over residues 1 to 10 (MERGEGRRGD) and 35 to 50 (KWWKEQNQKLQEENSS). The tract at residues 1 to 75 (MERGEGRRGD…KGGPENSNCA (75 aa)) is disordered. The AP2/ERF DNA-binding region spans 75 to 132 (AYRGVRQRTWGKWVAEIREPNRGRRLWLGSFPTALEAAHAYDEAARAMYGPTARVNFA).

It belongs to the AP2/ERF transcription factor family. ERF subfamily.

It is found in the nucleus. Functionally, transcriptional activator that binds specifically to the DNA sequence 5'-[AG]CCGAC-3'. Binding to the C-repeat/DRE element mediates high salinity- and dehydration-inducible transcription. The protein is Dehydration-responsive element-binding protein 2A (DREB2A) of Oryza sativa subsp. indica (Rice).